Reading from the N-terminus, the 276-residue chain is Cell division protein FtsQ (276 aa).

Residues 1–11 are Cytoplasmic-facing; sequence MQYILKLKYYL. Residues 12–32 traverse the membrane as a helical segment; it reads YNITWKLVFICVMLVLLIVGI. Topologically, residues 33–276 are periplasmic; the sequence is HKNIKWVCDY…NVSKGSHDYD (244 aa). A POTRA domain is found at 45–115; the sequence is GPLSYIIVTG…NTLKINLIEY (71 aa).

It belongs to the FtsQ/DivIB family. FtsQ subfamily. As to quaternary structure, part of a complex composed of FtsB, FtsL and FtsQ.

Its subcellular location is the cell inner membrane. Functionally, essential cell division protein. May link together the upstream cell division proteins, which are predominantly cytoplasmic, with the downstream cell division proteins, which are predominantly periplasmic. May control correct divisome assembly. This Blochmanniella floridana protein is Cell division protein FtsQ.